The primary structure comprises 197 residues: Ribonuclease HII (197 aa).

The 184-residue stretch at 14–197 (GIIAGVDEVG…RKNFAPIRIL (184 aa)) folds into the RNase H type-2 domain. Aspartate 20, glutamate 21, and aspartate 112 together coordinate a divalent metal cation.

The protein belongs to the RNase HII family. It depends on Mn(2+) as a cofactor. Mg(2+) is required as a cofactor.

It localises to the cytoplasm. It carries out the reaction Endonucleolytic cleavage to 5'-phosphomonoester.. Functionally, endonuclease that specifically degrades the RNA of RNA-DNA hybrids. The chain is Ribonuclease HII from Wolbachia pipientis subsp. Culex pipiens (strain wPip).